The chain runs to 186 residues: Peptide deformylase (186 aa).

Cysteine 113 and histidine 156 together coordinate Fe cation. The active site involves glutamate 157. Residue histidine 160 participates in Fe cation binding.

This sequence belongs to the polypeptide deformylase family. Fe(2+) is required as a cofactor.

It carries out the reaction N-terminal N-formyl-L-methionyl-[peptide] + H2O = N-terminal L-methionyl-[peptide] + formate. Its function is as follows. Removes the formyl group from the N-terminal Met of newly synthesized proteins. Requires at least a dipeptide for an efficient rate of reaction. N-terminal L-methionine is a prerequisite for activity but the enzyme has broad specificity at other positions. This chain is Peptide deformylase, found in Lactiplantibacillus plantarum (strain ATCC BAA-793 / NCIMB 8826 / WCFS1) (Lactobacillus plantarum).